Reading from the N-terminus, the 697-residue chain is MSDMSGDVVEHPKLLFDRPNEPLITPKGDNKAVFQLSEKLVPPEYANNGVELNDRFGDDATEKIPLKTLDSYPAFTKASQLPSDADFSLLLPKHQEMATEVIDAFMNVPLNQLQDFLSTCVYARANLNPQLFNYCYSVALMHRDDTKNVPIQNFAETFPSKFMDSQVFQRAREVTAVLPQNVPRIPIIIPRDYTATDLEEEHRLAYWREDIGVNLHHWHWHLVYPFTASQRSIVAKDRRGELFFHMHQQLIARYNCERLNHSLKRVKKFSNWREPIPEAYFPKLDSLTSARGWPPRQANMYWQDLNRPVDGLNITINDMERWRRNVEEAISTGRVTKADGSSAELDIDTLGNMLEASILSPNRELYGSIHNNGHSFAAYMHDPTHRYLESFGVIADEATTMRDPFFYRWHAWIDDTCQRHKESAYVRPYTRSELENPGVQVTSVSVETAGGQPNTLNTFWMSSDVDLSKGLDFSDRGAVYARFTYLNNRPFRYVININNTGSARRTTVRIFMAPKFDERNLVWSLADQRKMFIEMDRFVQPLNAGQNTITRNSTDSSVTIPFEQTFRDLSPQGSDPRRTSLAEFNFCGCGWPQHMLVPKGTEAGAAYQLFVMLSNYDLDSVDQPGGNQLSCVEASSFCGLKDKKYPDRRSMGFPFDRPSSIATNIEDFILPNMALQDITIRLSNVVEQNPRNPPSAV.

A propeptide spans 1-101 (MSDMSGDVVE…PKHQEMATEV (101 aa)) (removed by PPAE1). His217, His221, and His247 together coordinate Cu cation. N-linked (GlcNAc...) asparagine glycans are attached at residues Asn260 and Asn313. The Proton acceptor role is filled by Glu355. Residues His370, His374, and His410 each contribute to the Cu cation site. N-linked (GlcNAc...) asparagine glycans are attached at residues Asn498 and Asn552. 2 disulfides stabilise this stretch: Cys587–Cys631 and Cys589–Cys638.

Belongs to the tyrosinase family. In terms of assembly, heterodimer. It depends on Cu(2+) as a cofactor. In terms of processing, activated by the cleavage of the N-terminal propeptide by PPAE1. In terms of tissue distribution, expressed in hemocytes.

It is found in the secreted. The enzyme catalyses L-tyrosine + O2 = L-dopaquinone + H2O. It catalyses the reaction 2 L-dopa + O2 = 2 L-dopaquinone + 2 H2O. Its activity is regulated as follows. Activated by a cationic detergent cetyl pyridinium chloride (CPC). Inhibited by phenyl thio-urea (PTU). This is a copper-containing oxidase that functions in the formation of pigments such as melanins and other polyphenolic compounds. Catalyzes the rate-limiting conversions of tyrosine to DOPA, DOPA to DOPA-quinone and possibly 5,6 dihydroxyindole to indole-5'6 quinone. Catalyzes the oxidation of 4-methylcatechol. Binds to the surface of hemocytes and is involved in hemocyte melanization. The sequence is that of Phenoloxidase 1 from Spodoptera litura (Asian cotton leafworm).